Reading from the N-terminus, the 154-residue chain is Ribosomal RNA large subunit methyltransferase H (154 aa).

S-adenosyl-L-methionine-binding positions include glycine 103 and phenylalanine 122–phenylalanine 127.

It belongs to the RNA methyltransferase RlmH family. As to quaternary structure, homodimer.

It is found in the cytoplasm. The enzyme catalyses pseudouridine(1915) in 23S rRNA + S-adenosyl-L-methionine = N(3)-methylpseudouridine(1915) in 23S rRNA + S-adenosyl-L-homocysteine + H(+). Functionally, specifically methylates the pseudouridine at position 1915 (m3Psi1915) in 23S rRNA. The polypeptide is Ribosomal RNA large subunit methyltransferase H (Caldicellulosiruptor bescii (strain ATCC BAA-1888 / DSM 6725 / KCTC 15123 / Z-1320) (Anaerocellum thermophilum)).